The primary structure comprises 728 residues: Homoaconitase, mitochondrial (728 aa).

The transit peptide at M1 to Y24 directs the protein to the mitochondrion. [4Fe-4S] cluster-binding residues include C362, C422, and C425.

This sequence belongs to the aconitase/IPM isomerase family. Requires [4Fe-4S] cluster as cofactor.

It localises to the mitochondrion. It catalyses the reaction (2R,3S)-homoisocitrate = cis-homoaconitate + H2O. It functions in the pathway amino-acid biosynthesis; L-lysine biosynthesis via AAA pathway; L-alpha-aminoadipate from 2-oxoglutarate: step 3/5. Functionally, catalyzes the reversible hydration of cis-homoaconitate to (2R,3S)-homoisocitrate, a step in the alpha-aminoadipate pathway for lysine biosynthesis. This Cryptococcus neoformans var. neoformans serotype D (strain JEC21 / ATCC MYA-565) (Filobasidiella neoformans) protein is Homoaconitase, mitochondrial (LYS4).